The primary structure comprises 31 residues: MEALVYTFLLVGTLGIIFFSIFFREPPRLLK.

The helical transmembrane segment at 3-23 (ALVYTFLLVGTLGIIFFSIFF) threads the bilayer.

This sequence belongs to the PsbT family. As to quaternary structure, PSII is composed of 1 copy each of membrane proteins PsbA, PsbB, PsbC, PsbD, PsbE, PsbF, PsbH, PsbI, PsbJ, PsbK, PsbL, PsbM, PsbT, PsbY, PsbZ, Psb30/Ycf12, at least 3 peripheral proteins of the oxygen-evolving complex and a large number of cofactors. It forms dimeric complexes.

It localises to the plastid. The protein resides in the chloroplast thylakoid membrane. Found at the monomer-monomer interface of the photosystem II (PS II) dimer, plays a role in assembly and dimerization of PSII. PSII is a light-driven water plastoquinone oxidoreductase, using light energy to abstract electrons from H(2)O, generating a proton gradient subsequently used for ATP formation. The protein is Photosystem II reaction center protein T of Bigelowiella natans (Pedinomonas minutissima).